Reading from the N-terminus, the 302-residue chain is uncharacterized protein (302 aa).

Residues 1–28 (MNKLTAQNLLKKSRFLKYSLLTSISVGA) form the signal peptide.

This is an uncharacterized protein from Rickettsia prowazekii (strain Madrid E).